The following is a 400-amino-acid chain: Argininosuccinate synthase (400 aa).

Residue 8-16 (AYSGGLDTS) coordinates ATP. L-citrulline is bound by residues Y87 and S92. ATP is bound at residue G117. Positions 119, 123, and 124 each coordinate L-aspartate. N123 is a binding site for L-citrulline. L-citrulline-binding residues include R127, S175, E259, and Y271.

This sequence belongs to the argininosuccinate synthase family. Type 1 subfamily. As to quaternary structure, homotetramer.

The protein localises to the cytoplasm. The catalysed reaction is L-citrulline + L-aspartate + ATP = 2-(N(omega)-L-arginino)succinate + AMP + diphosphate + H(+). Its pathway is amino-acid biosynthesis; L-arginine biosynthesis; L-arginine from L-ornithine and carbamoyl phosphate: step 2/3. The protein is Argininosuccinate synthase of Parafrankia sp. (strain EAN1pec).